A 377-amino-acid polypeptide reads, in one-letter code: Nitric oxide reductase FlRd-NAD(+) reductase (377 aa).

Belongs to the FAD-dependent oxidoreductase family. The cofactor is FAD.

It is found in the cytoplasm. It carries out the reaction 2 reduced [nitric oxide reductase rubredoxin domain] + NAD(+) + H(+) = 2 oxidized [nitric oxide reductase rubredoxin domain] + NADH. It functions in the pathway nitrogen metabolism; nitric oxide reduction. In terms of biological role, one of at least two accessory proteins for anaerobic nitric oxide (NO) reductase. Reduces the rubredoxin moiety of NO reductase. The polypeptide is Nitric oxide reductase FlRd-NAD(+) reductase (Salmonella schwarzengrund (strain CVM19633)).